Consider the following 660-residue polypeptide: Bifunctional polymyxin resistance protein ArnA (660 aa).

A formyltransferase ArnAFT region spans residues 1–304 (MKAVIFAYHD…TLGLVAGARL (304 aa)). His104 acts as the Proton donor; for formyltransferase activity in catalysis. Residues Arg114 and 136–140 (VKRAD) each bind (6R)-10-formyltetrahydrofolate. A dehydrogenase ArnADH region spans residues 314–660 (RRIRVLILGV…RSVDVAERAS (347 aa)). NAD(+)-binding positions include Asp347 and 368–369 (DI). UDP-alpha-D-glucuronate contacts are provided by residues Ala393, Tyr398, and 432 to 433 (TS). Glu434 acts as the Proton acceptor; for decarboxylase activity in catalysis. UDP-alpha-D-glucuronate is bound by residues Arg460, Asn492, 526–535 (KLIDGGQQKR), and Tyr613. Arg619 serves as the catalytic Proton donor; for decarboxylase activity.

In the N-terminal section; belongs to the Fmt family. UDP-L-Ara4N formyltransferase subfamily. This sequence in the C-terminal section; belongs to the NAD(P)-dependent epimerase/dehydratase family. UDP-glucuronic acid decarboxylase subfamily. In terms of assembly, homohexamer, formed by a dimer of trimers.

The enzyme catalyses UDP-alpha-D-glucuronate + NAD(+) = UDP-beta-L-threo-pentopyranos-4-ulose + CO2 + NADH. The catalysed reaction is UDP-4-amino-4-deoxy-beta-L-arabinose + (6R)-10-formyltetrahydrofolate = UDP-4-deoxy-4-formamido-beta-L-arabinose + (6S)-5,6,7,8-tetrahydrofolate + H(+). It participates in nucleotide-sugar biosynthesis; UDP-4-deoxy-4-formamido-beta-L-arabinose biosynthesis; UDP-4-deoxy-4-formamido-beta-L-arabinose from UDP-alpha-D-glucuronate: step 1/3. The protein operates within nucleotide-sugar biosynthesis; UDP-4-deoxy-4-formamido-beta-L-arabinose biosynthesis; UDP-4-deoxy-4-formamido-beta-L-arabinose from UDP-alpha-D-glucuronate: step 3/3. It functions in the pathway bacterial outer membrane biogenesis; lipopolysaccharide biosynthesis. Functionally, bifunctional enzyme that catalyzes the oxidative decarboxylation of UDP-glucuronic acid (UDP-GlcUA) to UDP-4-keto-arabinose (UDP-Ara4O) and the addition of a formyl group to UDP-4-amino-4-deoxy-L-arabinose (UDP-L-Ara4N) to form UDP-L-4-formamido-arabinose (UDP-L-Ara4FN). The modified arabinose is attached to lipid A and is required for resistance to polymyxin and cationic antimicrobial peptides. The polypeptide is Bifunctional polymyxin resistance protein ArnA (Salmonella paratyphi C (strain RKS4594)).